Reading from the N-terminus, the 158-residue chain is SsrA-binding protein (158 aa).

Positions 133–147 (KRQALRERQDNREAQ) are enriched in basic and acidic residues. The interval 133 to 158 (KRQALRERQDNREAQRAMASRKHLGE) is disordered.

It belongs to the SmpB family.

The protein resides in the cytoplasm. In terms of biological role, required for rescue of stalled ribosomes mediated by trans-translation. Binds to transfer-messenger RNA (tmRNA), required for stable association of tmRNA with ribosomes. tmRNA and SmpB together mimic tRNA shape, replacing the anticodon stem-loop with SmpB. tmRNA is encoded by the ssrA gene; the 2 termini fold to resemble tRNA(Ala) and it encodes a 'tag peptide', a short internal open reading frame. During trans-translation Ala-aminoacylated tmRNA acts like a tRNA, entering the A-site of stalled ribosomes, displacing the stalled mRNA. The ribosome then switches to translate the ORF on the tmRNA; the nascent peptide is terminated with the 'tag peptide' encoded by the tmRNA and targeted for degradation. The ribosome is freed to recommence translation, which seems to be the essential function of trans-translation. In Leifsonia xyli subsp. xyli (strain CTCB07), this protein is SsrA-binding protein.